A 306-amino-acid polypeptide reads, in one-letter code: Pantothenate synthetase (306 aa).

Residue methionine 37 to histidine 44 coordinates ATP. The active-site Proton donor is histidine 44. Position 69 (glutamine 69) interacts with (R)-pantoate. Glutamine 69 provides a ligand contact to beta-alanine. Position 155–158 (glycine 155–aspartate 158) interacts with ATP. Glutamine 161 contacts (R)-pantoate. Residues valine 184 and lysine 192–arginine 195 contribute to the ATP site.

This sequence belongs to the pantothenate synthetase family. In terms of assembly, homodimer.

The protein resides in the cytoplasm. It carries out the reaction (R)-pantoate + beta-alanine + ATP = (R)-pantothenate + AMP + diphosphate + H(+). It functions in the pathway cofactor biosynthesis; (R)-pantothenate biosynthesis; (R)-pantothenate from (R)-pantoate and beta-alanine: step 1/1. In terms of biological role, catalyzes the condensation of pantoate with beta-alanine in an ATP-dependent reaction via a pantoyl-adenylate intermediate. This is Pantothenate synthetase from Corynebacterium jeikeium (strain K411).